The sequence spans 380 residues: Cytochrome b (380 aa).

The next 4 helical transmembrane spans lie at phenylalanine 34–threonine 54, tryptophan 78–isoleucine 99, tryptophan 114–leucine 134, and phenylalanine 179–threonine 199. The heme b site is built by histidine 84 and histidine 98. Heme b-binding residues include histidine 183 and histidine 197. Histidine 202 provides a ligand contact to a ubiquinone. 4 helical membrane-spanning segments follow: residues leucine 227–serine 247, leucine 289–histidine 309, leucine 321–serine 341, and phenylalanine 348–proline 368.

It belongs to the cytochrome b family. In terms of assembly, the cytochrome bc1 complex contains 11 subunits: 3 respiratory subunits (MT-CYB, CYC1 and UQCRFS1), 2 core proteins (UQCRC1 and UQCRC2) and 6 low-molecular weight proteins (UQCRH/QCR6, UQCRB/QCR7, UQCRQ/QCR8, UQCR10/QCR9, UQCR11/QCR10 and a cleavage product of UQCRFS1). This cytochrome bc1 complex then forms a dimer. It depends on heme b as a cofactor.

The protein resides in the mitochondrion inner membrane. In terms of biological role, component of the ubiquinol-cytochrome c reductase complex (complex III or cytochrome b-c1 complex) that is part of the mitochondrial respiratory chain. The b-c1 complex mediates electron transfer from ubiquinol to cytochrome c. Contributes to the generation of a proton gradient across the mitochondrial membrane that is then used for ATP synthesis. In Pinguinus impennis (Great auk), this protein is Cytochrome b (MT-CYB).